Consider the following 656-residue polypeptide: Replication protein A 70 kDa DNA-binding subunit A (656 aa).

The OB DNA-binding region spans 225-307; sequence AIKARVTAKG…NHLNNEWEIL (83 aa). The C4-type zinc finger occupies 516–542; the sequence is CPNMIGDRQCNKKVTKSTNGNWTCDKC.

It belongs to the replication factor A protein 1 family. Heterotrimer of RPA1, RPA2 and RPA3 (canonical replication protein A complex). Interacts with RPA2B. Expressed in root tips, roots, shoot apical meristem (SAM), young leaves, flag leaves and ears, and at lower levels in mature leaves.

It localises to the nucleus. In terms of biological role, component of the replication protein A complex (RPA) required for DNA recombination, repair and replication. The activity of RPA is mediated by single-stranded DNA binding and protein interactions. Plays an essential role in meiotic and somatic DNA repair, but is dispensable for DNA replication and homologous recombination. Is essential for normal progression through meiosis in pollen mother cells. Is involved in repair of double-strand DNA breaks (DSBs) induced by genotoxic stresses. The sequence is that of Replication protein A 70 kDa DNA-binding subunit A (RPA1A) from Oryza sativa subsp. japonica (Rice).